The sequence spans 101 residues: NAD(P)H-quinone oxidoreductase subunit 4L, chloroplastic (101 aa).

Helical transmembrane passes span 2–22 (MLEHVLVLSAYLFSIGIYGLI), 32–52 (MCLELILNAVNLNFVTFSDFF), and 61–81 (IFSIFVIAIAAAEAAIGPAIV).

Belongs to the complex I subunit 4L family. As to quaternary structure, NDH is composed of at least 16 different subunits, 5 of which are encoded in the nucleus.

The protein resides in the plastid. The protein localises to the chloroplast thylakoid membrane. The enzyme catalyses a plastoquinone + NADH + (n+1) H(+)(in) = a plastoquinol + NAD(+) + n H(+)(out). It catalyses the reaction a plastoquinone + NADPH + (n+1) H(+)(in) = a plastoquinol + NADP(+) + n H(+)(out). Functionally, NDH shuttles electrons from NAD(P)H:plastoquinone, via FMN and iron-sulfur (Fe-S) centers, to quinones in the photosynthetic chain and possibly in a chloroplast respiratory chain. The immediate electron acceptor for the enzyme in this species is believed to be plastoquinone. Couples the redox reaction to proton translocation, and thus conserves the redox energy in a proton gradient. This Fagopyrum esculentum subsp. ancestrale (Wild buckwheat) protein is NAD(P)H-quinone oxidoreductase subunit 4L, chloroplastic.